Here is a 256-residue protein sequence, read N- to C-terminus: MYSTSNRRGRSQTQRGSHVRRTGVKRSYGAARGDDRRRPNVVSKTQVEPRMTIQRVQENQFGPEFVLSQNSALSTFVTYPSYVKTVPNRTRTYIKLKRVRFKGTLKIERGQGDTIMDGPSSNIEGVFSMVIVVDRKPHVSQSGRLHTFDELFGARIHCHGNLSVVPALKDRYYIRHVTKRVVSLEKDTLLIDLHGTTQLSNKRYNCWASFSDLERDSCNGVYGNITKNALLVYYCWLSDAQSKASTYVSFELDYLG.

Residues 1–16 (MYSTSNRRGRSQTQRG) show a composition bias toward polar residues. A disordered region spans residues 1 to 46 (MYSTSNRRGRSQTQRGSHVRRTGVKRSYGAARGDDRRRPNVVSKTQ). The Bipartite nuclear localization signal motif lies at 21 to 42 (RTGVKRSYGAARGDDRRRPNVV). Positions 81–96 (SYVKTVPNRTRTYIKL) match the Nuclear localization signal motif. The interaction with Arabidopsis thaliana NSI protein stretch occupies residues 150–187 (ELFGARIHCHGNLSVVPALKDRYYIRHVTKRVVSLEKD). The short motif at 177–198 (VTKRVVSLEKDTLLIDLHGTTQ) is the Nuclear export signal element.

The protein belongs to the begomovirus nuclear shuttle protein family. Binds to single-stranded and double-stranded viral DNA. Interacts with the host nuclear shuttle interacting (NSI) protein. This interaction may allow NSP to recruit NSI monomers to the viral genome and thus regulate nuclear export of viral genome by NSP.

It is found in the host nucleus. Its subcellular location is the host cytoplasm. The protein localises to the host cell membrane. Functionally, binds to the genomic viral ssDNA, shuttles it into and out of the cell nucleus. Begomoviruses use 2 proteins to transport their DNA from cell to cell. The nuclear shuttle protein (NSP) shuttles it between nucleus and cytoplasm and the movement protein (MP) probably transports the DNA-NSP complex to the cell periphery and facilitates movement across the cell wall. This Squash leaf curl virus (SLCV) protein is Nuclear shuttle protein.